A 121-amino-acid polypeptide reads, in one-letter code: MTSSTPTAPTAQAHGRFIRGSVSKVRRVLDQIRGRTYRDALIMLEFMPYRSTGPITKVLRSAVANAEHNLGLDPSSLVISSATADMGPSMKRYRPRAQGRAYQIKKQTCHISIAVAAQTDS.

This sequence belongs to the universal ribosomal protein uL22 family. In terms of assembly, part of the 50S ribosomal subunit.

This protein binds specifically to 23S rRNA; its binding is stimulated by other ribosomal proteins, e.g. L4, L17, and L20. It is important during the early stages of 50S assembly. It makes multiple contacts with different domains of the 23S rRNA in the assembled 50S subunit and ribosome. Its function is as follows. The globular domain of the protein is located near the polypeptide exit tunnel on the outside of the subunit, while an extended beta-hairpin is found that lines the wall of the exit tunnel in the center of the 70S ribosome. The polypeptide is Large ribosomal subunit protein uL22 (Synechococcus sp. (strain CC9605)).